A 261-amino-acid polypeptide reads, in one-letter code: 3-methyl-2-oxobutanoate hydroxymethyltransferase (261 aa).

Mg(2+)-binding residues include Asp44 and Asp83. Residues 44-45 (DS), Asp83, and Lys112 each bind 3-methyl-2-oxobutanoate. Glu114 contacts Mg(2+). Catalysis depends on Glu181, which acts as the Proton acceptor.

This sequence belongs to the PanB family. In terms of assembly, homodecamer; pentamer of dimers. Mg(2+) is required as a cofactor.

The protein resides in the cytoplasm. The enzyme catalyses 3-methyl-2-oxobutanoate + (6R)-5,10-methylene-5,6,7,8-tetrahydrofolate + H2O = 2-dehydropantoate + (6S)-5,6,7,8-tetrahydrofolate. The protein operates within cofactor biosynthesis; (R)-pantothenate biosynthesis; (R)-pantoate from 3-methyl-2-oxobutanoate: step 1/2. Functionally, catalyzes the reversible reaction in which hydroxymethyl group from 5,10-methylenetetrahydrofolate is transferred onto alpha-ketoisovalerate to form ketopantoate. In Acidithiobacillus ferrooxidans (strain ATCC 23270 / DSM 14882 / CIP 104768 / NCIMB 8455) (Ferrobacillus ferrooxidans (strain ATCC 23270)), this protein is 3-methyl-2-oxobutanoate hydroxymethyltransferase.